We begin with the raw amino-acid sequence, 50 residues long: Defensin D2 (50 aa).

4 disulfides stabilise this stretch: C3-C50, C14-C35, C20-C44, and C24-C46.

In terms of processing, contains 4 disulfide bonds.

It is found in the secreted. In terms of biological role, antimicrobial peptide active against fungi, Gram-positive and Gram-negative bacteria. Inhibits growth of hyphae in the fungi A.niger (IC(50)=3.5 ug/ml), B.sorokiniana (IC(50)=1.8 ug/ml), F.oxysporum (IC(50)=5.3 ug/ml), F.graminearum (IC(50)=6.9 ug/ml), F.culmorum (IC(50)=6.9 ug/ml) and B.cinerea (IC(50)=13.7 ug/ml). Has no effect on spore germination. Destroys spores in germinated conidia by disruption of cell walls and membranes in A.niger and B.sorokiniana. Causes vacuolization of germinated macro- and microconidia in F.oxysporum, F.graminearum and F.culmorum. Strongly inhibits growth of P.infestans on potato tubers above concentrations of 3.4 ug/ml. Inhibits growth of Gram-positive bacteria C.michiganensis and B.subtilis and of Gram-negative bacteria P.syringae, E.carotovora and E.coli. The polypeptide is Defensin D2 (Nigella sativa (Black cumin)).